Here is a 610-residue protein sequence, read N- to C-terminus: GATOR complex protein NPRL3 (610 aa).

Phosphoserine is present on S437. The disordered stretch occupies residues 474-501; sequence REASEDHSSLASDNIAVQPSSSHKSNFS. Residues 482–501 show a composition bias toward polar residues; sequence SLASDNIAVQPSSSHKSNFS.

This sequence belongs to the NPR3 family. Component of the GATOR complex consisting of mio, Nup44A/Seh1, Im11, Nplr3, Nplr2, Wdr24, Wdr59 and Sec13. Within the GATOR complex, probable component of the GATOR1 subcomplex which is likely composed of Iml1, Nplr2 and Nplr3. Interacts with Nprl2.

It localises to the cytoplasm. Its subcellular location is the lysosome. An essential component of the GATOR subcomplex GATOR1 which functions as an inhibitor of the amino acid-sensing branch of the TORC1 signaling pathway. The two GATOR subcomplexes, GATOR1 and GATOR2, regulate the TORC1 pathway in order to mediate metabolic homeostasis, female gametogenesis and the response to amino acid limitation and complete starvation. The function of GATOR1 in negatively regulating the TORC1 pathway is essential for maintaining baseline levels of TORC1 activity under nutrient rich conditions, and for promoting survival during amino acid or complete starvation by inhibiting TORC1-dependent cell growth and promoting catabolic metabolism and autophagy. In addition, this inhibition of TORC1 is necessary to maintain female fertility under normal conditions and during periods of nutrient stress. GATOR1 and GATOR2 act at different stages of oogenesis to regulate TORC1 in order to control meiotic entry and promote oocyte growth and development. After exactly four mitotic cyst divisions, the GATOR1 complex members (Iml1, Nprl2 and Nprl3) down-regulate TORC1 to slow cellular metabolism and promote the mitotic/meiotic transition. At later stages of oogenesis, the mio and Nup44A components of the GATOR2 complex inhibit GATOR1 and thus activate TORC1 to promote meiotic progression, and drive oocyte growth and development. This Drosophila melanogaster (Fruit fly) protein is GATOR complex protein NPRL3.